We begin with the raw amino-acid sequence, 107 residues long: UPF0145 protein YbjQ (107 aa).

Belongs to the UPF0145 family.

This Shigella flexneri protein is UPF0145 protein YbjQ.